Here is a 544-residue protein sequence, read N- to C-terminus: Chaperonin GroEL 2 (544 aa).

Residues 29–32, 86–90, Gly-413, and Asp-495 contribute to the ATP site; these read TLGP and DGTTT. The tract at residues 525-544 is disordered; that stretch reads PEPKSNKPAGGGGGVDDYDY. The segment covering 533–544 has biased composition (gly residues); it reads AGGGGGVDDYDY.

Belongs to the chaperonin (HSP60) family. In terms of assembly, forms a cylinder of 14 subunits composed of two heptameric rings stacked back-to-back. Interacts with the co-chaperonin GroES.

Its subcellular location is the cytoplasm. The enzyme catalyses ATP + H2O + a folded polypeptide = ADP + phosphate + an unfolded polypeptide.. Together with its co-chaperonin GroES, plays an essential role in assisting protein folding. The GroEL-GroES system forms a nano-cage that allows encapsulation of the non-native substrate proteins and provides a physical environment optimized to promote and accelerate protein folding. The protein is Chaperonin GroEL 2 of Synechococcus sp. (strain JA-3-3Ab) (Cyanobacteria bacterium Yellowstone A-Prime).